Here is a 509-residue protein sequence, read N- to C-terminus: Putative Rieske 2Fe-2S iron-sulfur protein YhfW (509 aa).

The Rieske domain maps to 423 to 509 (KPDVQFEDIS…IKPLKQIDLD (87 aa)). [2Fe-2S] cluster contacts are provided by C463, H465, C481, and H484. C468 and C483 form a disulfide bridge.

It belongs to the Rieske iron-sulfur protein family. The cofactor is [2Fe-2S] cluster.

This is Putative Rieske 2Fe-2S iron-sulfur protein YhfW (yhfW) from Bacillus subtilis (strain 168).